We begin with the raw amino-acid sequence, 648 residues long: Shugoshin (648 aa).

Coiled coils occupy residues 95–122 (LMIKITDLETKISELVQENVQLRSRLSV) and 208–273 (DDRA…KDEA). 5 disordered regions span residues 188–239 (KVVG…RSSR), 262–334 (EADK…QEDA), 367–443 (VYRD…RPRR), 483–518 (TNRKLRKQREGVADSADVHGETDHEQDPEQSPAAED), and 628–648 (HRARAKAERQVGKKPAFKVST). Composition is skewed to basic and acidic residues over residues 200–217 (VRGERETLDDRAQQHQEA) and 262–273 (EADKSRSAKDEA). A compositionally biased stretch (polar residues) spans 306–315 (ASGTLTQSNE). 2 stretches are compositionally biased toward basic and acidic residues: residues 424–440 (IVVDEVMPHNDYSDATR) and 490–509 (QREGVADSADVHGETDHEQD).

Belongs to the shugoshin family.

It is found in the nucleus. The protein resides in the chromosome. The protein localises to the centromere. Plays a central role in chromosome cohesion during cell division by preventing premature dissociation of cohesin complex from centromeres after prophase, when most of cohesin complex dissociates from chromosomes arms. May act by protecting RAD21 and or REC8 from cleavage by ESP1/separase. In Eremothecium gossypii (strain ATCC 10895 / CBS 109.51 / FGSC 9923 / NRRL Y-1056) (Yeast), this protein is Shugoshin (SGO1).